Here is a 370-residue protein sequence, read N- to C-terminus: Chaperone protein DnaJ (370 aa).

Residues 5 to 69 (DYYEVLGVDR…QKKAHYDQFG (65 aa)) enclose the J domain. Residues 128 to 210 (GKETTIEIPR…CGGKGKVRKR (83 aa)) form a CR-type zinc finger. 8 residues coordinate Zn(2+): C141, C144, C158, C161, C184, C187, C198, and C201. CXXCXGXG motif repeat units follow at residues 141-148 (CHTCSGSG), 158-165 (CPHCGGSG), 184-191 (CHHCEGTG), and 198-205 (CATCGGKG).

It belongs to the DnaJ family. Homodimer. The cofactor is Zn(2+).

It localises to the cytoplasm. Functionally, participates actively in the response to hyperosmotic and heat shock by preventing the aggregation of stress-denatured proteins and by disaggregating proteins, also in an autonomous, DnaK-independent fashion. Unfolded proteins bind initially to DnaJ; upon interaction with the DnaJ-bound protein, DnaK hydrolyzes its bound ATP, resulting in the formation of a stable complex. GrpE releases ADP from DnaK; ATP binding to DnaK triggers the release of the substrate protein, thus completing the reaction cycle. Several rounds of ATP-dependent interactions between DnaJ, DnaK and GrpE are required for fully efficient folding. Also involved, together with DnaK and GrpE, in the DNA replication of plasmids through activation of initiation proteins. This is Chaperone protein DnaJ from Halalkalibacterium halodurans (strain ATCC BAA-125 / DSM 18197 / FERM 7344 / JCM 9153 / C-125) (Bacillus halodurans).